The following is a 343-amino-acid chain: UDP-N-acetylglucosamine--N-acetylmuramyl-(pentapeptide) pyrophosphoryl-undecaprenol N-acetylglucosamine transferase (343 aa).

UDP-N-acetyl-alpha-D-glucosamine-binding positions include 10-12, Asn-113, Ser-174, and Gln-275; that span reads TGG.

This sequence belongs to the glycosyltransferase 28 family. MurG subfamily.

The protein localises to the cell membrane. The enzyme catalyses di-trans,octa-cis-undecaprenyl diphospho-N-acetyl-alpha-D-muramoyl-L-alanyl-D-glutamyl-meso-2,6-diaminopimeloyl-D-alanyl-D-alanine + UDP-N-acetyl-alpha-D-glucosamine = di-trans,octa-cis-undecaprenyl diphospho-[N-acetyl-alpha-D-glucosaminyl-(1-&gt;4)]-N-acetyl-alpha-D-muramoyl-L-alanyl-D-glutamyl-meso-2,6-diaminopimeloyl-D-alanyl-D-alanine + UDP + H(+). It participates in cell wall biogenesis; peptidoglycan biosynthesis. Cell wall formation. Catalyzes the transfer of a GlcNAc subunit on undecaprenyl-pyrophosphoryl-MurNAc-pentapeptide (lipid intermediate I) to form undecaprenyl-pyrophosphoryl-MurNAc-(pentapeptide)GlcNAc (lipid intermediate II). This is UDP-N-acetylglucosamine--N-acetylmuramyl-(pentapeptide) pyrophosphoryl-undecaprenol N-acetylglucosamine transferase from Wolbachia sp. subsp. Brugia malayi (strain TRS).